The sequence spans 342 residues: Ferredoxin--NADP reductase (342 aa).

Cys-17, Asp-36, Gln-44, Tyr-49, Val-89, Phe-124, Asp-289, and Thr-330 together coordinate FAD.

It belongs to the ferredoxin--NADP reductase type 2 family. Homodimer. It depends on FAD as a cofactor.

The enzyme catalyses 2 reduced [2Fe-2S]-[ferredoxin] + NADP(+) + H(+) = 2 oxidized [2Fe-2S]-[ferredoxin] + NADPH. This is Ferredoxin--NADP reductase from Bradyrhizobium diazoefficiens (strain JCM 10833 / BCRC 13528 / IAM 13628 / NBRC 14792 / USDA 110).